We begin with the raw amino-acid sequence, 111 residues long: V-type proton ATPase subunit G 2 (111 aa).

It belongs to the V-ATPase G subunit family. In terms of assembly, V-ATPase is a heteromultimeric enzyme composed of a peripheral catalytic V1 complex (components A to H) attached to an integral membrane V0 proton pore complex (components: a, c, c', c'' and d).

Functionally, catalytic subunit of the peripheral V1 complex of vacuolar ATPase (V-ATPase). V-ATPase is responsible for acidifying a variety of intracellular compartments in eukaryotic cells. This chain is V-type proton ATPase subunit G 2 (VATG2), found in Nicotiana tabacum (Common tobacco).